The sequence spans 165 residues: Growth arrest and DNA damage-inducible protein GADD45 alpha (165 aa).

Residue Thr2 is modified to Phosphothreonine.

The protein belongs to the GADD45 family. In terms of assembly, interacts with MAPK14. Predominantly monomeric but also forms dimers and other oligomers as concentration increases. Interacts with GADD45GIP1. Interacts weakly with PCNA. Interacts with AURKA, likely to compete with dimerization.

The protein resides in the nucleus. In T-cells, functions as a regulator of p38 MAPKs by inhibiting p88 phosphorylation and activity. Might affect PCNA interaction with some CDK (cell division protein kinase) complexes; stimulates DNA excision repair in vitro and inhibits entry of cells into S phase. This is Growth arrest and DNA damage-inducible protein GADD45 alpha (GADD45A) from Homo sapiens (Human).